A 171-amino-acid polypeptide reads, in one-letter code: T-cell surface glycoprotein CD3 delta chain (171 aa).

Positions 1–21 (MEHSRFLSGLILAAFLSRVSP) are cleaved as a signal peptide. Topologically, residues 22–104 (YEVEMEELED…NCVELDSATL (83 aa)) are extracellular. Cysteine 37 and cysteine 72 form a disulfide bridge. An N-linked (GlcNAc...) asparagine glycan is attached at asparagine 38. The helical transmembrane segment at 105 to 125 (AGIIVTDIIATLLLALGVYCF) threads the bilayer. Over 126–171 (AGHEMGRFSRAADTQDLLRNDQLYQPLRDRNDGQYSRLGENWARNK) the chain is Cytoplasmic. The ITAM domain occupies 138-166 (DTQDLLRNDQLYQPLRDRNDGQYSRLGEN). Tyrosine 149 and tyrosine 160 each carry phosphotyrosine.

The TCR-CD3 complex is composed of a CD3D/CD3E and a CD3G/CD3E heterodimers that preferentially associate with TCRalpha and TCRbeta, respectively, to form TCRalpha/CD3E/CD3G and TCRbeta/CD3G/CD3E trimers. In turn, the hexamer interacts with CD3Z homodimer to form the TCR-CD3 complex. Alternatively, TCRalpha and TCRbeta can be replaced by TCRgamma and TCRdelta. Interacts with coreceptors CD4 and CD8. Phosphorylated on Tyr residues after T-cell receptor triggering by LCK in association with CD4/CD8. As to expression, CD3D is mostly present on T-lymphocytes with its TCR-CD3 partners. Present also in fetal NK-cells.

It is found in the cell membrane. Functionally, part of the TCR-CD3 complex present on T-lymphocyte cell surface that plays an essential role in adaptive immune response. When antigen presenting cells (APCs) activate T-cell receptor (TCR), TCR-mediated signals are transmitted across the cell membrane by the CD3 chains CD3D, CD3E, CD3G and CD3Z. All CD3 chains contain immunoreceptor tyrosine-based activation motifs (ITAMs) in their cytoplasmic domain. Upon TCR engagement, these motifs become phosphorylated by Src family protein tyrosine kinases LCK and FYN, resulting in the activation of downstream signaling pathways. In addition of this role of signal transduction in T-cell activation, CD3D plays an essential role in thymocyte differentiation. Indeed, participates in correct intracellular TCR-CD3 complex assembly and surface expression. In absence of a functional TCR-CD3 complex, thymocytes are unable to differentiate properly. Interacts with CD4 and CD8 and thus serves to establish a functional link between the TCR and coreceptors CD4 and CD8, which is needed for activation and positive selection of CD4 or CD8 T-cells. The polypeptide is T-cell surface glycoprotein CD3 delta chain (CD3D) (Sus scrofa (Pig)).